Consider the following 391-residue polypeptide: Polyketide synthase 5 (391 aa).

Residue cysteine 164 is part of the active site.

The protein belongs to the thiolase-like superfamily. Chalcone/stilbene synthases family. Homodimer. In terms of tissue distribution, expressed in fruits.

The catalysed reaction is (E)-4-coumaroyl-CoA + 3 malonyl-CoA + 3 H(+) = 2',4,4',6'-tetrahydroxychalcone + 3 CO2 + 4 CoA. Its pathway is secondary metabolite biosynthesis; flavonoid biosynthesis. Its function is as follows. Polyketide synthase producing naringenin chalcone. Can use p-coumaryl-CoA as substrate. The polypeptide is Polyketide synthase 5 (PKS5) (Rubus idaeus (Raspberry)).